The chain runs to 292 residues: ATP synthase gamma chain (292 aa).

The protein belongs to the ATPase gamma chain family. In terms of assembly, F-type ATPases have 2 components, CF(1) - the catalytic core - and CF(0) - the membrane proton channel. CF(1) has five subunits: alpha(3), beta(3), gamma(1), delta(1), epsilon(1). CF(0) has three main subunits: a, b and c.

It localises to the cell inner membrane. Functionally, produces ATP from ADP in the presence of a proton gradient across the membrane. The gamma chain is believed to be important in regulating ATPase activity and the flow of protons through the CF(0) complex. This Hyphomonas neptunium (strain ATCC 15444) protein is ATP synthase gamma chain.